Consider the following 143-residue polypeptide: Ribonuclease H (143 aa).

Positions 1 to 136 (MQEIEIFCDG…CDSLAKLEAQ (136 aa)) constitute an RNase H type-1 domain. Asp-9, Glu-47, Asp-69, and Asp-128 together coordinate Mg(2+).

It belongs to the RNase H family. In terms of assembly, monomer. Mg(2+) serves as cofactor.

It localises to the cytoplasm. It catalyses the reaction Endonucleolytic cleavage to 5'-phosphomonoester.. Its function is as follows. Endonuclease that specifically degrades the RNA of RNA-DNA hybrids. This chain is Ribonuclease H, found in Helicobacter pylori (strain HPAG1).